The following is a 423-amino-acid chain: tRNA(Ile)-lysidine synthase (423 aa).

Residue 27–32 participates in ATP binding; it reads SGGVDS.

This sequence belongs to the tRNA(Ile)-lysidine synthase family.

The protein resides in the cytoplasm. The enzyme catalyses cytidine(34) in tRNA(Ile2) + L-lysine + ATP = lysidine(34) in tRNA(Ile2) + AMP + diphosphate + H(+). Ligates lysine onto the cytidine present at position 34 of the AUA codon-specific tRNA(Ile) that contains the anticodon CAU, in an ATP-dependent manner. Cytidine is converted to lysidine, thus changing the amino acid specificity of the tRNA from methionine to isoleucine. The polypeptide is tRNA(Ile)-lysidine synthase (Streptococcus mutans serotype c (strain ATCC 700610 / UA159)).